Here is a 463-residue protein sequence, read N- to C-terminus: MKSAVETLNPTRVRLTVEVPFEELKDSLDAAYKKINQQVTVKGFRKGKIPARVIDQRFGRGAVLEEAVNDALPKFYTEAVNEAELNPLGQPEVDITELKDGETLNFTAEVDVRPTIEIPDYSGIEVEVDAVEVSDEDVEKAVTELRERFASTSPVERAAEDGDVVTLDLEAKVDGEVLEDGVAEGVSYTIGSGELLDGIDDAVKGLEAGGETTFTSELKGGSAAGKEAEVTVKVSQVAARELPELDDDFAQLASEFDTLEELKADSRKRLENMKQYDQATQAQERVLEKLLELAEVPVPEKLLEDEINTRKHNLEHHQLGQMGLDLEKYLEIQGKTVEEFDAETKEAAVKGIKTQFVLDELVNKEKLNVNQEELTEHLMRRAASSGMSPDQFAQAVVEGGQVPMLVGEVARGKALAVVVEAATVKDTNGEIVDLDDEDETESTPETTEAAEAAEESTEDKPEA.

The 82-residue stretch at 162–243 (GDVVTLDLEA…VSQVAARELP (82 aa)) folds into the PPIase FKBP-type domain. A disordered region spans residues 427 to 463 (TNGEIVDLDDEDETESTPETTEAAEAAEESTEDKPEA). The span at 432 to 442 (VDLDDEDETES) shows a compositional bias: acidic residues.

The protein belongs to the FKBP-type PPIase family. Tig subfamily.

It is found in the cytoplasm. The enzyme catalyses [protein]-peptidylproline (omega=180) = [protein]-peptidylproline (omega=0). In terms of biological role, involved in protein export. Acts as a chaperone by maintaining the newly synthesized protein in an open conformation. Functions as a peptidyl-prolyl cis-trans isomerase. The polypeptide is Trigger factor (Streptomyces avermitilis (strain ATCC 31267 / DSM 46492 / JCM 5070 / NBRC 14893 / NCIMB 12804 / NRRL 8165 / MA-4680)).